We begin with the raw amino-acid sequence, 90 residues long: Sec-independent protein translocase protein TatA (90 aa).

The helical transmembrane segment at 1-21 (MGGASIWHWIVVGVIVMLLFG) threads the bilayer. Residues 42 to 90 (GMADEDQPQAPVANQSPPPVSATEPVRTLPPHQGEPAPAANASVDRKVG) form a disordered region.

This sequence belongs to the TatA/E family. In terms of assembly, the Tat system comprises two distinct complexes: a TatABC complex, containing multiple copies of TatA, TatB and TatC subunits, and a separate TatA complex, containing only TatA subunits. Substrates initially bind to the TatABC complex, which probably triggers association of the separate TatA complex to form the active translocon.

The protein localises to the cell inner membrane. Its function is as follows. Part of the twin-arginine translocation (Tat) system that transports large folded proteins containing a characteristic twin-arginine motif in their signal peptide across membranes. TatA could form the protein-conducting channel of the Tat system. The polypeptide is Sec-independent protein translocase protein TatA (Methylobacterium nodulans (strain LMG 21967 / CNCM I-2342 / ORS 2060)).